A 134-amino-acid polypeptide reads, in one-letter code: MNTEMYQTPMEVAVYQLHNFSISFFSSLLGGDVVSVKLDNSASGASVVALDNKIEQAMDLVKNHLMYAVREEVEVLKEQIRELVEKNSQLERENTLLKTLASPEQLEKFQSRLSPEEPAPEAPETPEAPGGSAV.

Positions 1–60 (MNTEMYQTPMEVAVYQLHNFSISFFSSLLGGDVVSVKLDNSASGASVVALDNKIEQAMDL) are AP1-binding. Residues 76 to 97 (LKEQIRELVEKNSQLERENTLL) are leucine-zipper. Positions 101 to 134 (ASPEQLEKFQSRLSPEEPAPEAPETPEAPGGSAV) are disordered. Phosphoserine is present on S102. A Phosphothreonine modification is found at T125. Low complexity predominate over residues 125–134 (TPEAPGGSAV).

This sequence belongs to the TSC-22/Dip/Bun family. As to quaternary structure, can form homodimers, however it is likely to function as a monomer. Interacts with NFKB1. Interacts (via N-terminus) with JUN and FOS; these interactions inhibit the binding of active AP1 to its target DNA. Interacts with MYOD1. Interacts with HDAC1; this interaction affects HDAC1 activity on MYOG promoter and thus inhibits MYOD1 transcriptional activity.

The protein resides in the cytoplasm. It is found in the nucleus. Protects T-cells from IL2 deprivation-induced apoptosis through the inhibition of FOXO3A transcriptional activity that leads to the down-regulation of the pro-apoptotic factor BCL2L11. In macrophages, plays a role in the anti-inflammatory and immunosuppressive effects of glucocorticoids and IL10. In T-cells, inhibits anti-CD3-induced NFKB1 nuclear translocation and thereby NFKB1 DNA-binding activities. In vitro, suppresses AP-1 transcription factor complex DNA-binding activities. This chain is TSC22 domain family protein 3 (Tsc22d3), found in Rattus norvegicus (Rat).